A 198-amino-acid polypeptide reads, in one-letter code: Segregation and condensation protein B (198 aa).

Positions 168–198 (KLADPATDEPDQNEMDLFFDRFNQSKEQEEE) are disordered.

It belongs to the ScpB family. In terms of assembly, homodimer. Homodimerization may be required to stabilize the binding of ScpA to the Smc head domains. Component of a cohesin-like complex composed of ScpA, ScpB and the Smc homodimer, in which ScpA and ScpB bind to the head domain of Smc. The presence of the three proteins is required for the association of the complex with DNA.

The protein localises to the cytoplasm. In terms of biological role, participates in chromosomal partition during cell division. May act via the formation of a condensin-like complex containing Smc and ScpA that pull DNA away from mid-cell into both cell halves. The chain is Segregation and condensation protein B from Listeria monocytogenes serovar 1/2a (strain ATCC BAA-679 / EGD-e).